The sequence spans 794 residues: Phenylalanine--tRNA ligase beta subunit (794 aa).

In terms of domain architecture, tRNA-binding spans 40-158 (NSLNSELVLG…LKKYLGKDVK (119 aa)). The B5 domain maps to 402–477 (KNKTEFEIKI…RLYSYDNIQE (76 aa)). Mg(2+) contacts are provided by Asp-455, Asp-461, Glu-464, and Glu-465. In terms of domain architecture, FDX-ACB spans 702–794 (SKFQSSSRDL…NVKKMKVVIR (93 aa)).

It belongs to the phenylalanyl-tRNA synthetase beta subunit family. Type 1 subfamily. Tetramer of two alpha and two beta subunits. It depends on Mg(2+) as a cofactor.

It is found in the cytoplasm. It carries out the reaction tRNA(Phe) + L-phenylalanine + ATP = L-phenylalanyl-tRNA(Phe) + AMP + diphosphate + H(+). The chain is Phenylalanine--tRNA ligase beta subunit from Mycoplasma capricolum subsp. capricolum (strain California kid / ATCC 27343 / NCTC 10154).